The sequence spans 970 residues: Unconventional myosin-XIX (970 aa).

Residues 35 to 758 (YKLDDLTRVN…MLELLECGRA (724 aa)) form the Myosin motor domain. 132–139 (GESGAGKT) is a binding site for ATP. The interval 602–624 (LEQLLQVLHSTTPHYIRCIKPNS) is actin-binding. Phosphoserine is present on Ser-685. IQ domains lie at 759–779 (RVLE…RHRE) and 783–812 (QWRA…AATV). A myMOMA region region spans residues 824–970 (MACLAAKELD…VTSSAFTGLG (147 aa)).

This sequence belongs to the TRAFAC class myosin-kinesin ATPase superfamily. Myosin family. As to quaternary structure, myosin is a hexamer of 2 heavy chains and 4 light chains: interacts with myosin light chains MYL9 and MYL12B. In terms of tissue distribution, widely expressed in multiple tissues and cell lines.

The protein localises to the mitochondrion outer membrane. It localises to the cytoplasm. It is found in the cytoskeleton. Functionally, actin-based motor molecule with ATPase activity that localizes to the mitochondrion outer membrane. Motor protein that moves towards the plus-end of actin filaments. Required for mitochondrial inheritance during mitosis. May be involved in mitochondrial transport or positioning. In Homo sapiens (Human), this protein is Unconventional myosin-XIX.